The primary structure comprises 301 residues: Phosducin-like protein (301 aa).

N-acetylthreonine is present on threonine 2. The disordered stretch occupies residues 15 to 60; that stretch reads YYYSTSEDEDSDHEDKDRGRGAPASSSTPAEAELAGEGISVNTGPK. 2 positions are modified to phosphoserine: serine 20 and serine 25. Residues 36-49 are compositionally biased toward low complexity; sequence APASSSTPAEAELA. In terms of domain architecture, Phosducin spans 36-299; the sequence is APASSSTPAE…TCHSEDSDLE (264 aa). The interval 158–301 is thioredoxin fold; that stretch reads FKQVLEIPSG…HSEDSDLEID (144 aa). Phosphoserine occurs at positions 226, 293, and 296.

This sequence belongs to the phosducin family. As to quaternary structure, interacts with the CCT chaperonin complex. Forms a complex with the beta and gamma subunits of the GTP-binding protein, transducin.

The protein localises to the cell projection. It is found in the cilium. Functionally, functions as a co-chaperone for CCT in the assembly of heterotrimeric G protein complexes, facilitates the assembly of both Gbeta-Ggamma and RGS-Gbeta5 heterodimers. Also acts as a positive regulator of hedgehog signaling and regulates ciliary function. This Rattus norvegicus (Rat) protein is Phosducin-like protein (Pdcl).